The chain runs to 420 residues: Acetyl-CoA acetyltransferase, mitochondrial (420 aa).

A mitochondrion-targeting transit peptide spans 1 to 33; sequence MAFCGPRTAARLSHSTRALHYTHRGHVSQRTLN. Residue C119 is the Acyl-thioester intermediate of the active site. CoA is bound by residues Y212, 251–253, and K256; that span reads RVD. A K(+)-binding site is contributed by Y212. Residues A273, A274, and A276 each contribute to the K(+) site. Residue S277 coordinates CoA. V374 is a binding site for K(+). C406 (proton donor/acceptor) is an active-site residue.

Belongs to the thiolase-like superfamily. Thiolase family. As to quaternary structure, homotetramer.

It is found in the mitochondrion. It carries out the reaction 2 acetyl-CoA = acetoacetyl-CoA + CoA. The catalysed reaction is propanoyl-CoA + acetyl-CoA = 2-methyl-3-oxobutanoyl-CoA + CoA. It functions in the pathway lipid metabolism; fatty acid beta-oxidation. Its function is as follows. This is one of the enzymes that catalyzes the last step of the mitochondrial beta-oxidation pathway, an aerobic process breaking down fatty acids into acetyl-CoA. Using free coenzyme A/CoA, catalyzes the thiolytic cleavage of medium- to long-chain 3-oxoacyl-CoAs into acetyl-CoA and a fatty acyl-CoA shortened by two carbon atoms. The activity of the enzyme is reversible and it can also catalyze the condensation of two acetyl-CoA molecules into acetoacetyl-CoA. Thereby, it plays a major role in ketone body metabolism. The chain is Acetyl-CoA acetyltransferase, mitochondrial (acat1) from Xenopus tropicalis (Western clawed frog).